The primary structure comprises 159 residues: MHIHIISVGKLKEKYLMQGIDEYKKRLSSYAKVDIIEVPDEKAPEHLSEQEMEQIKQREGERILAKIPNDAYVIALAIEGKMKSSEQFAASLDKLATYGKSKIAFIIGGSLGLSKQVMQRADEALSFSKMTFPHQLMRLILLEQIYRAFRINRGEPYHK.

S-adenosyl-L-methionine-binding positions include leucine 76, glycine 108, and 127–132; that span reads FSKMTF.

Belongs to the RNA methyltransferase RlmH family. Homodimer.

Its subcellular location is the cytoplasm. It carries out the reaction pseudouridine(1915) in 23S rRNA + S-adenosyl-L-methionine = N(3)-methylpseudouridine(1915) in 23S rRNA + S-adenosyl-L-homocysteine + H(+). Functionally, specifically methylates the pseudouridine at position 1915 (m3Psi1915) in 23S rRNA. In Geobacillus sp. (strain WCH70), this protein is Ribosomal RNA large subunit methyltransferase H.